Reading from the N-terminus, the 256-residue chain is Thiazole synthase (256 aa).

The active-site Schiff-base intermediate with DXP is K95. 1-deoxy-D-xylulose 5-phosphate-binding positions include G156, 182–183 (AG), and 204–205 (NT).

The protein belongs to the ThiG family. Homotetramer. Forms heterodimers with either ThiH or ThiS.

Its subcellular location is the cytoplasm. It carries out the reaction [ThiS sulfur-carrier protein]-C-terminal-Gly-aminoethanethioate + 2-iminoacetate + 1-deoxy-D-xylulose 5-phosphate = [ThiS sulfur-carrier protein]-C-terminal Gly-Gly + 2-[(2R,5Z)-2-carboxy-4-methylthiazol-5(2H)-ylidene]ethyl phosphate + 2 H2O + H(+). It functions in the pathway cofactor biosynthesis; thiamine diphosphate biosynthesis. In terms of biological role, catalyzes the rearrangement of 1-deoxy-D-xylulose 5-phosphate (DXP) to produce the thiazole phosphate moiety of thiamine. Sulfur is provided by the thiocarboxylate moiety of the carrier protein ThiS. In vitro, sulfur can be provided by H(2)S. The polypeptide is Thiazole synthase (Citrobacter koseri (strain ATCC BAA-895 / CDC 4225-83 / SGSC4696)).